We begin with the raw amino-acid sequence, 324 residues long: MNSSRVVFPANFSYEDPLPFECNEDPNVVLSLAMYGMQSSYLIVGAVLNVMIVYTVFHGNSYRDNSFYMLYCADAIVGIYINTAEVIFGRIFIYITPLCPIASPYFFTPSILTKMYYAALHYSLGFKTFSQIFMSFNRMTCVIFLMKHLKLWKQILKPVLIITFILPLGVIWKILLSRVYINPNGAGFSVNYKDYFPWANISILHLFHFTLCFVLVIIFFVATILGLTMLKQRIKSAERSLTIVTMIMAVQTVTFASIQIYFVFFAAYTPKIRSVLLQIVSFVFDSLYVFSPIALIVMSRQLRKDIFNLKDKETQISMYPNSEL.

The next 8 helical transmembrane spans lie at 39-59 (SSYL…VFHG), 69-89 (MLYC…VIFG), 91-111 (IFIY…TPSI), 128-146 (TFSQ…IFLM), 155-175 (ILKP…WKIL), 206-226 (LFHF…TILG), 246-266 (MIMA…VFFA), and 279-299 (IVSF…IVMS).

The protein belongs to the nematode receptor-like protein srg family.

The protein resides in the membrane. The chain is Serpentine receptor class gamma-10 (srg-10) from Caenorhabditis elegans.